A 281-amino-acid chain; its full sequence is MYPPEFSYVRAESLQEALKFLEGNDNTRPLAGGQSLIPMLKLRVLSPDYILDINRLNELNYVKTSLNGVSIGALTRYHDILSNDIVKSKVPLMHHATRTIGDMQVRNMGTIGGAISNADPASDMPVVLTALNATIILSSASGSRSVKALDFFKGPFTTDTNKGELVTQIEVPVLDGYKTVYKKVVRRAGDYALASVALAIKLKGNEIEDIKLAYGGVHDKPFRAMEVEKNVIGKKLNDDLVKDIASKVSSQINPPSDHRGSSWYRREVVKVLTMKAFKEVA.

One can recognise an FAD-binding PCMH-type domain in the interval 1-176; that stretch reads MYPPEFSYVR…TQIEVPVLDG (176 aa). Residues 31–35 and 110–114 contribute to the FAD site; these read AGGQS and TIGGA.

Heterotrimer composed of a large chain (CutA), a medium chain (CutB) and a small chain (CutC). The cofactor is FAD.

Its subcellular location is the cytoplasm. The catalysed reaction is D-glyceraldehyde + A + H2O = (R)-glycerate + AH2 + H(+). Component of the glyceraldehyde dehydrogenase which is involved the nonphosphorylated Entner-Doudoroff pathway. Catalyzes the oxidation of D-glyceraldehyde to yield glycerate. When the artificial electron acceptor 2,6-dichlorophenol-indophenol (Cl2Ind) is used, the enzyme shows a broad substrate range (glyceraldehyde-3-phosphate, formaldehyde, acetaldehyde, propionaldehyde and isobutyraldehyde), but is most active with D-glyceraldehyde. It is not known which acceptor is utilized in vivo. The polypeptide is Glyceraldehyde dehydrogenase medium chain (cutB) (Sulfolobus acidocaldarius (strain ATCC 33909 / DSM 639 / JCM 8929 / NBRC 15157 / NCIMB 11770)).